A 173-amino-acid chain; its full sequence is Crossover junction endodeoxyribonuclease RuvC (173 aa).

Active-site residues include aspartate 8, glutamate 67, and aspartate 139. Aspartate 8, glutamate 67, and aspartate 139 together coordinate Mg(2+).

This sequence belongs to the RuvC family. In terms of assembly, homodimer which binds Holliday junction (HJ) DNA. The HJ becomes 2-fold symmetrical on binding to RuvC with unstacked arms; it has a different conformation from HJ DNA in complex with RuvA. In the full resolvosome a probable DNA-RuvA(4)-RuvB(12)-RuvC(2) complex forms which resolves the HJ. Mg(2+) is required as a cofactor.

Its subcellular location is the cytoplasm. The enzyme catalyses Endonucleolytic cleavage at a junction such as a reciprocal single-stranded crossover between two homologous DNA duplexes (Holliday junction).. Its function is as follows. The RuvA-RuvB-RuvC complex processes Holliday junction (HJ) DNA during genetic recombination and DNA repair. Endonuclease that resolves HJ intermediates. Cleaves cruciform DNA by making single-stranded nicks across the HJ at symmetrical positions within the homologous arms, yielding a 5'-phosphate and a 3'-hydroxyl group; requires a central core of homology in the junction. The consensus cleavage sequence is 5'-(A/T)TT(C/G)-3'. Cleavage occurs on the 3'-side of the TT dinucleotide at the point of strand exchange. HJ branch migration catalyzed by RuvA-RuvB allows RuvC to scan DNA until it finds its consensus sequence, where it cleaves and resolves the cruciform DNA. The polypeptide is Crossover junction endodeoxyribonuclease RuvC (Vibrio vulnificus (strain CMCP6)).